The primary structure comprises 307 residues: Aspartate carbamoyltransferase catalytic subunit (307 aa).

Carbamoyl phosphate is bound by residues Arg-54 and Thr-55. Residue Lys-83 participates in L-aspartate binding. Carbamoyl phosphate is bound by residues Arg-104, His-132, and Gln-135. L-aspartate is bound by residues Arg-165 and Arg-228. The carbamoyl phosphate site is built by Leu-267 and Pro-268.

Belongs to the aspartate/ornithine carbamoyltransferase superfamily. ATCase family. As to quaternary structure, heterododecamer (2C3:3R2) of six catalytic PyrB chains organized as two trimers (C3), and six regulatory PyrI chains organized as three dimers (R2).

It carries out the reaction carbamoyl phosphate + L-aspartate = N-carbamoyl-L-aspartate + phosphate + H(+). The protein operates within pyrimidine metabolism; UMP biosynthesis via de novo pathway; (S)-dihydroorotate from bicarbonate: step 2/3. Its function is as follows. Catalyzes the condensation of carbamoyl phosphate and aspartate to form carbamoyl aspartate and inorganic phosphate, the committed step in the de novo pyrimidine nucleotide biosynthesis pathway. This is Aspartate carbamoyltransferase catalytic subunit from Clostridium perfringens (strain 13 / Type A).